A 734-amino-acid polypeptide reads, in one-letter code: Photosystem I P700 chlorophyll a apoprotein A2 (734 aa).

Transmembrane regions (helical) follow at residues 46-69, 135-158, 175-199, 273-291, 330-353, 369-395, 417-439, and 517-535; these read IFAS…FHVA, LYTG…LHLQ, LNHH…HVAI, IAHH…GHMY, IHFQ…QHMY, AALY…IFFI, AIIS…LYVH, and FLVH…LILV. Cysteine 559 and cysteine 568 together coordinate [4Fe-4S] cluster. The next 2 helical transmembrane spans lie at 575–596 and 643–665; these read AFYL…YWHW and LSVW…MFLI. Chlorophyll a is bound by residues histidine 654, methionine 662, and tyrosine 670. Position 671 (tryptophan 671) interacts with phylloquinone. A helical transmembrane segment spans residues 707-727; sequence LVGLAHFSVGYIFTYAAFLIA.

This sequence belongs to the PsaA/PsaB family. As to quaternary structure, the PsaA/B heterodimer binds the P700 chlorophyll special pair and subsequent electron acceptors. PSI consists of a core antenna complex that captures photons, and an electron transfer chain that converts photonic excitation into a charge separation. The eukaryotic PSI reaction center is composed of at least 11 subunits. Requires P700 is a chlorophyll a/chlorophyll a' dimer, A0 is one or more chlorophyll a, A1 is one or both phylloquinones and FX is a shared 4Fe-4S iron-sulfur center. as cofactor.

Its subcellular location is the plastid. The protein localises to the chloroplast thylakoid membrane. The catalysed reaction is reduced [plastocyanin] + hnu + oxidized [2Fe-2S]-[ferredoxin] = oxidized [plastocyanin] + reduced [2Fe-2S]-[ferredoxin]. PsaA and PsaB bind P700, the primary electron donor of photosystem I (PSI), as well as the electron acceptors A0, A1 and FX. PSI is a plastocyanin-ferredoxin oxidoreductase, converting photonic excitation into a charge separation, which transfers an electron from the donor P700 chlorophyll pair to the spectroscopically characterized acceptors A0, A1, FX, FA and FB in turn. Oxidized P700 is reduced on the lumenal side of the thylakoid membrane by plastocyanin. This Saccharum hybrid (Sugarcane) protein is Photosystem I P700 chlorophyll a apoprotein A2.